Consider the following 252-residue polypeptide: Trans-aconitate 2-methyltransferase (252 aa).

The protein belongs to the methyltransferase superfamily. Tam family.

The protein resides in the cytoplasm. It catalyses the reaction trans-aconitate + S-adenosyl-L-methionine = (E)-3-(methoxycarbonyl)pent-2-enedioate + S-adenosyl-L-homocysteine. In terms of biological role, catalyzes the S-adenosylmethionine monomethyl esterification of trans-aconitate. This chain is Trans-aconitate 2-methyltransferase, found in Escherichia coli O139:H28 (strain E24377A / ETEC).